The primary structure comprises 31 residues: uncharacterized protein (31 aa).

This is an uncharacterized protein from Caenorhabditis elegans.